The primary structure comprises 226 residues: Enolase-phosphatase E1 (226 aa).

Belongs to the HAD-like hydrolase superfamily. MasA/MtnC family. Monomer. Mg(2+) serves as cofactor.

The catalysed reaction is 5-methylsulfanyl-2,3-dioxopentyl phosphate + H2O = 1,2-dihydroxy-5-(methylsulfanyl)pent-1-en-3-one + phosphate. It functions in the pathway amino-acid biosynthesis; L-methionine biosynthesis via salvage pathway; L-methionine from S-methyl-5-thio-alpha-D-ribose 1-phosphate: step 3/6. Its pathway is amino-acid biosynthesis; L-methionine biosynthesis via salvage pathway; L-methionine from S-methyl-5-thio-alpha-D-ribose 1-phosphate: step 4/6. Bifunctional enzyme that catalyzes the enolization of 2,3-diketo-5-methylthiopentyl-1-phosphate (DK-MTP-1-P) into the intermediate 2-hydroxy-3-keto-5-methylthiopentenyl-1-phosphate (HK-MTPenyl-1-P), which is then dephosphorylated to form the acireductone 1,2-dihydroxy-3-keto-5-methylthiopentene (DHK-MTPene). The chain is Enolase-phosphatase E1 from Shewanella baltica (strain OS195).